The sequence spans 270 residues: Putative phosphoenolpyruvate synthase regulatory protein (270 aa).

ADP is bound at residue 150–157; sequence GVSRCGKT.

The protein belongs to the pyruvate, phosphate/water dikinase regulatory protein family. PSRP subfamily.

It carries out the reaction [pyruvate, water dikinase] + ADP = [pyruvate, water dikinase]-phosphate + AMP + H(+). The catalysed reaction is [pyruvate, water dikinase]-phosphate + phosphate + H(+) = [pyruvate, water dikinase] + diphosphate. Bifunctional serine/threonine kinase and phosphorylase involved in the regulation of the phosphoenolpyruvate synthase (PEPS) by catalyzing its phosphorylation/dephosphorylation. This chain is Putative phosphoenolpyruvate synthase regulatory protein, found in Shewanella oneidensis (strain ATCC 700550 / JCM 31522 / CIP 106686 / LMG 19005 / NCIMB 14063 / MR-1).